Consider the following 945-residue polypeptide: Isoleucine--tRNA ligase (945 aa).

A 'HIGH' region motif is present at residues 66–76; it reads PYANGDIHLGH. Residue glutamate 581 participates in L-isoleucyl-5'-AMP binding. Residues 622–626 carry the 'KMSKS' region motif; sequence KMSKS. Lysine 625 is an ATP binding site. Cysteine 908, cysteine 911, cysteine 928, and cysteine 931 together coordinate Zn(2+).

This sequence belongs to the class-I aminoacyl-tRNA synthetase family. IleS type 1 subfamily. In terms of assembly, monomer. Zn(2+) is required as a cofactor.

The protein localises to the cytoplasm. The catalysed reaction is tRNA(Ile) + L-isoleucine + ATP = L-isoleucyl-tRNA(Ile) + AMP + diphosphate. Its function is as follows. Catalyzes the attachment of isoleucine to tRNA(Ile). As IleRS can inadvertently accommodate and process structurally similar amino acids such as valine, to avoid such errors it has two additional distinct tRNA(Ile)-dependent editing activities. One activity is designated as 'pretransfer' editing and involves the hydrolysis of activated Val-AMP. The other activity is designated 'posttransfer' editing and involves deacylation of mischarged Val-tRNA(Ile). This chain is Isoleucine--tRNA ligase, found in Paraburkholderia phymatum (strain DSM 17167 / CIP 108236 / LMG 21445 / STM815) (Burkholderia phymatum).